We begin with the raw amino-acid sequence, 133 residues long: Interleukin-4 (133 aa).

The signal sequence occupies residues 1-24 (MGLTYQLIPALVCLLAFTSTFVHG). N-linked (GlcNAc...) asparagine glycans are attached at residues Asn-28, Asn-45, Asn-62, Asn-84, Asn-96, and Asn-102. 2 disulfide bridges follow: Cys-48–Cys-85 and Cys-70–Cys-113.

Belongs to the IL-4/IL-13 family.

The protein localises to the secreted. Participates in at least several B-cell activation processes as well as of other cell types. It is a costimulator of DNA-synthesis. It induces the expression of class II MHC molecules on resting B-cells. It enhances both secretion and cell surface expression of IgE and IgG1. It also regulates the expression of the low affinity Fc receptor for IgE (CD23) on both lymphocytes and monocytes. Positively regulates IL31RA expression in macrophages. Stimulates autophagy in dendritic cells by interfering with mTORC1 signaling and through the induction of RUFY4. The sequence is that of Interleukin-4 (IL4) from Felis catus (Cat).